Reading from the N-terminus, the 78-residue chain is MNSVGEECTDMKRDYDQCFNRWFAEKFLKGAGSGDPCTELFRRYRECVQKAIKDKDIPVDGVDFMGPSKSKTESDGSS.

Positions 1 to 52 form a coiled coil; it reads MNSVGEECTDMKRDYDQCFNRWFAEKFLKGAGSGDPCTELFRRYRECVQKAI. The CHCH domain occupies 5-55; sequence GEECTDMKRDYDQCFNRWFAEKFLKGAGSGDPCTELFRRYRECVQKAIKDK. Short sequence motifs (cx9C motif) lie at residues 8–18 and 37–47; these read CTDMKRDYDQC and CTELFRRYREC. 2 disulfide bridges follow: Cys8/Cys47 and Cys18/Cys37.

Belongs to the TRIAP1/MDM35 family. Monomer. Forms a complex with prelid1 in the mitochondrion intermembrane space. Interacts with prelid3a.

The protein resides in the mitochondrion. Its subcellular location is the mitochondrion intermembrane space. The enzyme catalyses a 1,2-diacyl-sn-glycero-3-phosphate(in) = a 1,2-diacyl-sn-glycero-3-phosphate(out). Its function is as follows. Involved in the modulation of the mitochondrial apoptotic pathway by ensuring the accumulation of cardiolipin (CL) in mitochondrial membranes. The triap1:prelid1 complex probably functions as a phosphatidic acid (PA) transporter across the mitochondrion intermembrane space to provide PA for cardiolipin CL synthesis in the inner membrane. Likewise, the triap1:prelid3a complex mediates the transfer of phosphatidic acid (PA) between liposomes (in vitro) and probably functions as a PA transporter across the mitochondrion intermembrane space (in vivo). Mediates cell survival by inhibiting activation of caspase-9 which prevents induction of apoptosis. Required for pronephros development; probably involved at an early stage in the formation of pronephric components derived from the somatic layer. The protein is TP53-regulated inhibitor of apoptosis 1-A (triap1-a) of Xenopus laevis (African clawed frog).